A 252-amino-acid chain; its full sequence is F-box/SPRY domain-containing protein 1 (252 aa).

The 48-residue stretch at 1 to 48 folds into the F-box domain; it reads MVDPLCNYNVLEAIFSYLELSDLSRCSQVCKSWYHFLNDENSDVWRWH. The B30.2/SPRY domain maps to 58 to 250; the sequence is IKSDLLASVT…VSMVYLGTPL (193 aa).

It belongs to the FBXO45/Fsn family. In terms of assembly, component of an E3 ubiquitin ligase complex composed of hiw and Fsn.

It is found in the synapse. It functions in the pathway protein modification; protein ubiquitination. Required in the presynaptic motoneuron to down-regulate the levels of wnd and restrain synaptic terminal growth at the neuromuscular junction (NMJ). In Drosophila mojavensis (Fruit fly), this protein is F-box/SPRY domain-containing protein 1.